The following is an 844-amino-acid chain: Neuronal PAS domain-containing protein 4B (844 aa).

Positions 61-74 (KMYRSTKGASKARR) are basic motif; degenerate. Positions 61-114 (KMYRSTKGASKARRDQINAEIRSLKELLPISDADKARLSYLHIMSLACIYTRKS) constitute a bHLH domain. A helix-loop-helix motif region spans residues 75-114 (DQINAEIRSLKELLPISDADKARLSYLHIMSLACIYTRKS). PAS domains lie at 132–190 (SLPE…PVDH) and 294–343 (DMRI…LHNG). A compositionally biased stretch (polar residues) spans 410-422 (SRQSSDPLSSPDQ). 4 disordered regions span residues 410 to 432 (SRQS…SGLS), 444 to 479 (GRSS…GGGH), 702 to 725 (PLPN…SYSQ), and 757 to 784 (TEGG…EAPA). Pro residues predominate over residues 704 to 716 (PNLPSPSPVPPSP).

As to quaternary structure, efficient DNA binding requires dimerization with another bHLH protein.

It localises to the nucleus. Functionally, transcription factor expressed in neurons of the brain that regulates the excitatory-inhibitory balance within neural circuits and is required for contextual memory in the hippocampus. Plays a key role in the structural and functional plasticity of neurons. Acts as an early-response transcription factor in both excitatory and inhibitory neurons, where it induces distinct but overlapping sets of late-response genes in these two types of neurons, allowing the synapses that form on inhibitory and excitatory neurons to be modified by neuronal activity in a manner specific to their function within a circuit, thereby facilitating appropriate circuit responses to sensory experience. This is Neuronal PAS domain-containing protein 4B (npas4b) from Danio rerio (Zebrafish).